Here is a 387-residue protein sequence, read N- to C-terminus: Alpha-maltose-1-phosphate synthase (387 aa).

It belongs to the glycosyltransferase group 1 family.

The enzyme catalyses ADP-alpha-D-glucose + alpha-D-glucose 1-phosphate = alpha-maltose 1-phosphate + ADP + H(+). It functions in the pathway capsule biogenesis; capsule polysaccharide biosynthesis. Its pathway is glycan biosynthesis; glycogen biosynthesis. In terms of biological role, involved in the biosynthesis of the maltose-1-phosphate (M1P) building block required for alpha-glucan production by the key enzyme GlgE. Catalyzes the formation of an alpha-1,4 linkage between glucose from ADP-glucose and glucose 1-phosphate (G1P) to yield maltose-1-phosphate (M1P). This is Alpha-maltose-1-phosphate synthase from Mycobacterium tuberculosis (strain CDC 1551 / Oshkosh).